Consider the following 215-residue polypeptide: MNNTYPHPIIAREGWPYLGGIFIVTLIVQAAAGFGWAWPFWVLTLFVLQFFRDPARAVPTQANAILSPADGRIVAVEQVRDPYADRDSLKISVFMNVFNVHSNRAPVDGTVQQVQYFPGKFVNADLDKASLENERNAIVLRRADGQLVTSVQVAGLIARRILCYTKAGEVLTRGQRYGFIRFGSRVDVYLPLTARPRVTIGEKVSATLTVLAELD.

Catalysis depends on serine 184, which acts as the Schiff-base intermediate with substrate; via pyruvic acid. Serine 184 carries the post-translational modification Pyruvic acid (Ser); by autocatalysis.

It belongs to the phosphatidylserine decarboxylase family. PSD-A subfamily. In terms of assembly, heterodimer of a large membrane-associated beta subunit and a small pyruvoyl-containing alpha subunit. Requires pyruvate as cofactor. In terms of processing, is synthesized initially as an inactive proenzyme. Formation of the active enzyme involves a self-maturation process in which the active site pyruvoyl group is generated from an internal serine residue via an autocatalytic post-translational modification. Two non-identical subunits are generated from the proenzyme in this reaction, and the pyruvate is formed at the N-terminus of the alpha chain, which is derived from the carboxyl end of the proenzyme. The post-translation cleavage follows an unusual pathway, termed non-hydrolytic serinolysis, in which the side chain hydroxyl group of the serine supplies its oxygen atom to form the C-terminus of the beta chain, while the remainder of the serine residue undergoes an oxidative deamination to produce ammonia and the pyruvoyl prosthetic group on the alpha chain.

It is found in the cell membrane. The catalysed reaction is a 1,2-diacyl-sn-glycero-3-phospho-L-serine + H(+) = a 1,2-diacyl-sn-glycero-3-phosphoethanolamine + CO2. It participates in phospholipid metabolism; phosphatidylethanolamine biosynthesis; phosphatidylethanolamine from CDP-diacylglycerol: step 2/2. In terms of biological role, catalyzes the formation of phosphatidylethanolamine (PtdEtn) from phosphatidylserine (PtdSer). The chain is Phosphatidylserine decarboxylase proenzyme from Ralstonia pickettii (strain 12J).